The sequence spans 243 residues: Outer membrane protein A (243 aa).

The next 5 beta stranded transmembrane spans lie at 1–8 (LTAKLGYP), 13–21 (LDIYTRLGG), 48–57 (PVFAGGVEWA), 62–69 (IATRLEYQ), and 88–96 (LLSLGVSYR). A run of 4 repeats spans residues 107 to 108 (AP), 109 to 110 (AP), 111 to 112 (AP), and 113 to 114 (AP). Positions 107–114 (APAPAPAP) are 4 X 2 AA tandem repeats of A-P. The OmpA-like domain maps to 116-243 (VQTKHFTLKS…RRVEIEVKGI (128 aa)). Cysteine 217 and cysteine 229 form a disulfide bridge.

Belongs to the outer membrane OOP (TC 1.B.6) superfamily. OmpA family. Monomer and homodimer.

The protein localises to the cell outer membrane. With TolR probably plays a role in maintaining the position of the peptidoglycan cell wall in the periplasm. Acts as a porin with low permeability that allows slow penetration of small solutes; an internal gate slows down solute passage. Its function is as follows. Required for conjugation with F-type plasmids; probably serves as the mating receptor on recipient cells. The protein is Outer membrane protein A of Escherichia fergusonii.